The chain runs to 218 residues: MRIILLGAPGAGKGTQAQYISEAFGIPQISTGDMLRAAVKAATPLGLAAKKIMDEGGLVPDDLIISLVKERIAQPDCANGCLFDGFPRTLAQAEALRAGGIRIDHIIEMNVPDEEIIKRMSGRRVHLASGRTYHVTFNPPAVPDKDDLTGEPLVQRNDDCEETVRKRLKAYHELTEPLVGYYRNLSMNGSADAPKYSRIAGIGTVEQIKDEIIATLNG.

Gly-10–Thr-15 contributes to the ATP binding site. Residues Ser-30 to Val-59 form an NMP region. AMP is bound by residues Thr-31, Arg-36, Gly-57–Val-59, Gly-85–Arg-88, and Gln-92. The interval Gly-122–Asp-159 is LID. ATP-binding positions include Arg-123 and Thr-132–Tyr-133. Residues Arg-156 and Arg-167 each coordinate AMP. Gly-203 provides a ligand contact to ATP.

It belongs to the adenylate kinase family. Monomer.

It is found in the cytoplasm. The enzyme catalyses AMP + ATP = 2 ADP. It participates in purine metabolism; AMP biosynthesis via salvage pathway; AMP from ADP: step 1/1. Its function is as follows. Catalyzes the reversible transfer of the terminal phosphate group between ATP and AMP. Plays an important role in cellular energy homeostasis and in adenine nucleotide metabolism. The chain is Adenylate kinase from Chlorobaculum tepidum (strain ATCC 49652 / DSM 12025 / NBRC 103806 / TLS) (Chlorobium tepidum).